Consider the following 85-residue polypeptide: Polcalcin Aln g 4 (85 aa).

EF-hand domains are found at residues 7-42 (QDQA…LGSV) and 45-77 (DEVK…NRGL). Ca(2+)-binding residues include aspartate 20, asparagine 22, aspartate 24, lysine 26, glutamate 31, aspartate 55, aspartate 57, aspartate 59, and glutamate 66.

The sequence is that of Polcalcin Aln g 4 from Alnus glutinosa (European alder).